A 45-amino-acid polypeptide reads, in one-letter code: Amphipathic peptide Hj0164 (45 aa).

Positions 1 to 23 (MKSQAFFLLFLVVLLLATTQSEA) are cleaved as a signal peptide. Residue Phe-33 is modified to Phenylalanine amide. Positions 37–45 (SLRDVDTMK) are excised as a propeptide.

Belongs to the non-disulfide-bridged peptide (NDBP) superfamily. Short antimicrobial peptide (group 4) family. Expressed by the venom gland.

The protein localises to the secreted. It is found in the target cell membrane. Functionally, amphipathic peptide that shows antibacterial activities. The protein is Amphipathic peptide Hj0164 of Hottentotta judaicus (Black scorpion).